The following is a 509-amino-acid chain: Maturase K (509 aa).

Belongs to the intron maturase 2 family. MatK subfamily.

The protein localises to the plastid. The protein resides in the chloroplast. Usually encoded in the trnK tRNA gene intron. Probably assists in splicing its own and other chloroplast group II introns. This is Maturase K from Austrocylindropuntia vestita (Cactus).